The following is a 433-amino-acid chain: Urokinase-type plasminogen activator (433 aa).

An N-terminal signal peptide occupies residues 1–20 (MRALLAHLLLCVLVVSASKG). In terms of domain architecture, EGF-like spans 26-62 (VPSDCGCLNGGTCMSNKYFSSIHWCNCPKKFGGQHCE). Intrachain disulfides connect Cys30–Cys38, Cys32–Cys50, Cys52–Cys61, Cys69–Cys150, Cys90–Cys132, and Cys121–Cys145. Positions 33-56 (LNGGTCMSNKYFSSIHWCNCPKKF) are binds urokinase plasminogen activator surface receptor. The Kringle domain maps to 69-150 (CYEGNGHFYR…RVQECMVHNC (82 aa)). The interval 151–177 (ADGKKPSSPPEELQFQCGQRTLRPRFK) is connecting peptide. Position 157 is a phosphoserine (Ser157). Cystine bridges form between Cys167-Cys298, Cys208-Cys224, Cys216-Cys287, Cys315-Cys384, Cys347-Cys363, and Cys374-Cys402. In terms of domain architecture, Peptidase S1 spans 178-426 (IVGGEFTTIE…FLPWIHSHTR (249 aa)). Catalysis depends on charge relay system residues His223 and Asp274. The N-linked (GlcNAc...) asparagine glycan is linked to Asn324. A Phosphoserine modification is found at Ser325. The active-site Charge relay system is the Ser378.

The protein belongs to the peptidase S1 family. Found in high and low molecular mass forms. Each consists of two chains, A and B. The high molecular mass form contains a long chain A which is cleaved to yield a short chain A. Forms heterodimer with SERPINA5. Binds LRP1B; binding is followed by internalization and degradation. Interacts with MRC2. Interacts with PLAUR. In complex with SERPINE1, interacts with PLAUR/uPAR. Interacts with SORL1 and LRP1, either alone or in complex with SERPINE1; these interactions are abolished in the presence of LRPAP1/RAP. The ternary complex composed of PLAUR-PLAU-PAI1 also interacts with SORLA. In terms of processing, phosphorylation of Ser-157 and Ser-325 abolishes proadhesive ability but does not interfere with receptor binding. Post-translationally, produced as an inactive single-chain protein (pro-uPA or sc-uPA), is processed into the active disulfide-linked two-chain form of PLAU/uPA by a proteolytic event mediated, at least, by TMPRSS4.

It localises to the secreted. The enzyme catalyses Specific cleavage of Arg-|-Val bond in plasminogen to form plasmin.. Inhibited by SERPINA5. Inhibited by SERPINE1. In terms of biological role, specifically cleaves the zymogen plasminogen to form the active enzyme plasmin. In Papio cynocephalus (Yellow baboon), this protein is Urokinase-type plasminogen activator (PLAU).